Reading from the N-terminus, the 383-residue chain is Galactokinase (383 aa).

34–37 contributes to the substrate binding site; sequence EHTD. An ATP-binding site is contributed by 124–130; the sequence is GAGLSSS. Mg(2+)-binding residues include serine 130 and glutamate 162. Catalysis depends on aspartate 174, which acts as the Proton acceptor. Tyrosine 223 lines the substrate pocket.

The protein belongs to the GHMP kinase family. GalK subfamily.

The protein localises to the cytoplasm. The enzyme catalyses alpha-D-galactose + ATP = alpha-D-galactose 1-phosphate + ADP + H(+). Its pathway is carbohydrate metabolism; galactose metabolism. Its function is as follows. Catalyzes the transfer of the gamma-phosphate of ATP to D-galactose to form alpha-D-galactose-1-phosphate (Gal-1-P). The chain is Galactokinase from Yersinia pseudotuberculosis serotype O:1b (strain IP 31758).